We begin with the raw amino-acid sequence, 250 residues long: MTEKSDSTTHFGFETVPEHEKAGRVQGVFNSVASKYDIMNDVMSVGIHRIWKDAMMDWLAPRPGQRLLDVAGGTGDISFRFLKRAGHGHSTVLDLTTPMLEEGRKRAEAEQMAECLDWVTGDAMALPFKDNTFDVYTISFGIRNVTRPQEALNEAYRVLKPGGRLMVLEFSQLPNDGLQKLYDLYSFNVIPRMGQMIAGDYDSYQYLVESIRNFPDQETFLGMVKSAGFENAKHRNLSMGIAALHSGWKI.

Residues Thr-74, Asp-94, 122-123 (DA), and Ser-139 each bind S-adenosyl-L-methionine.

Belongs to the class I-like SAM-binding methyltransferase superfamily. MenG/UbiE family.

It carries out the reaction a 2-demethylmenaquinol + S-adenosyl-L-methionine = a menaquinol + S-adenosyl-L-homocysteine + H(+). It catalyses the reaction a 2-methoxy-6-(all-trans-polyprenyl)benzene-1,4-diol + S-adenosyl-L-methionine = a 5-methoxy-2-methyl-3-(all-trans-polyprenyl)benzene-1,4-diol + S-adenosyl-L-homocysteine + H(+). It participates in quinol/quinone metabolism; menaquinone biosynthesis; menaquinol from 1,4-dihydroxy-2-naphthoate: step 2/2. It functions in the pathway cofactor biosynthesis; ubiquinone biosynthesis. Its function is as follows. Methyltransferase required for the conversion of demethylmenaquinol (DMKH2) to menaquinol (MKH2) and the conversion of 2-polyprenyl-6-methoxy-1,4-benzoquinol (DDMQH2) to 2-polyprenyl-3-methyl-6-methoxy-1,4-benzoquinol (DMQH2). This chain is Ubiquinone/menaquinone biosynthesis C-methyltransferase UbiE, found in Ruegeria sp. (strain TM1040) (Silicibacter sp.).